Reading from the N-terminus, the 163-residue chain is Cyclic pyranopterin monophosphate synthase (163 aa).

Residues 79–81 (LCH) and 118–119 (ME) each bind substrate. D133 is an active-site residue.

It belongs to the MoaC family. Homohexamer; trimer of dimers.

It catalyses the reaction (8S)-3',8-cyclo-7,8-dihydroguanosine 5'-triphosphate = cyclic pyranopterin phosphate + diphosphate. Its pathway is cofactor biosynthesis; molybdopterin biosynthesis. Functionally, catalyzes the conversion of (8S)-3',8-cyclo-7,8-dihydroguanosine 5'-triphosphate to cyclic pyranopterin monophosphate (cPMP). The chain is Cyclic pyranopterin monophosphate synthase from Nocardioides sp. (strain ATCC BAA-499 / JS614).